The sequence spans 106 residues: Immunoglobulin lambda constant 1 (106 aa).

Residues 7 to 101 (PTVTLFPPSS…EGSTVEKTVA (95 aa)) enclose the Ig-like domain. A disulfide bridge connects residues Cys28 and Cys87.

In terms of assembly, immunoglobulins are composed of two identical heavy chains and two identical light chains; disulfide-linked.

The protein resides in the secreted. It localises to the cell membrane. Its function is as follows. Constant region of immunoglobulin light chains. Immunoglobulins, also known as antibodies, are membrane-bound or secreted glycoproteins produced by B lymphocytes. In the recognition phase of humoral immunity, the membrane-bound immunoglobulins serve as receptors which, upon binding of a specific antigen, trigger the clonal expansion and differentiation of B lymphocytes into immunoglobulins-secreting plasma cells. Secreted immunoglobulins mediate the effector phase of humoral immunity, which results in the elimination of bound antigens. The antigen binding site is formed by the variable domain of one heavy chain, together with that of its associated light chain. Thus, each immunoglobulin has two antigen binding sites with remarkable affinity for a particular antigen. The variable domains are assembled by a process called V-(D)-J rearrangement and can then be subjected to somatic hypermutations which, after exposure to antigen and selection, allow affinity maturation for a particular antigen. The polypeptide is Immunoglobulin lambda constant 1 (Homo sapiens (Human)).